Reading from the N-terminus, the 200-residue chain is Holliday junction resolvase RecU (200 aa).

The disordered stretch occupies residues 1–25; sequence MTIRYPNGKRYNQASQPQKTPIKTH. The span at 10 to 25 shows a compositional bias: polar residues; that stretch reads RYNQASQPQKTPIKTH. Mg(2+) contacts are provided by Thr-85, Asp-87, Glu-100, and Gln-119.

It belongs to the RecU family. Mg(2+) is required as a cofactor.

Its subcellular location is the cytoplasm. The catalysed reaction is Endonucleolytic cleavage at a junction such as a reciprocal single-stranded crossover between two homologous DNA duplexes (Holliday junction).. Its function is as follows. Endonuclease that resolves Holliday junction intermediates in genetic recombination. Cleaves mobile four-strand junctions by introducing symmetrical nicks in paired strands. Promotes annealing of linear ssDNA with homologous dsDNA. Required for DNA repair, homologous recombination and chromosome segregation. In Bacillus cereus (strain G9842), this protein is Holliday junction resolvase RecU.